The chain runs to 634 residues: tRNA uridine 5-carboxymethylaminomethyl modification enzyme MnmG (634 aa).

14 to 19 (GGGHAG) is an FAD binding site. Residue 279-293 (GPRYCPSIEDKVVRF) participates in NAD(+) binding.

This sequence belongs to the MnmG family. As to quaternary structure, homodimer. Heterotetramer of two MnmE and two MnmG subunits. FAD is required as a cofactor.

It is found in the cytoplasm. NAD-binding protein involved in the addition of a carboxymethylaminomethyl (cmnm) group at the wobble position (U34) of certain tRNAs, forming tRNA-cmnm(5)s(2)U34. This Xanthomonas campestris pv. campestris (strain 8004) protein is tRNA uridine 5-carboxymethylaminomethyl modification enzyme MnmG.